The chain runs to 109 residues: Parvalbumin beta-1 (109 aa).

Ser-2 is subject to N-acetylserine. 2 consecutive EF-hand domains span residues 39 to 74 (KSHE…FGAG) and 78 to 109 (LTAA…LVKA). Asp-52, Asp-54, Ser-56, Phe-58, Glu-60, Glu-63, Asp-91, Asp-93, Asp-95, Met-97, and Glu-102 together coordinate Ca(2+).

The protein belongs to the parvalbumin family.

In terms of biological role, in muscle, parvalbumin is thought to be involved in relaxation after contraction. It binds two calcium ions. The chain is Parvalbumin beta-1 from Gadus chalcogrammus (Alaska pollock).